The following is a 708-amino-acid chain: MGEPPPNPDPSQTRRASQGSERARSQEYSQPLLTIPEDGLNRPPPQRGSRSSQGSQDLQGTGLPHWPQRSSLVPDVQGDEGTEYHQSMPLGYTPGFPMEFSQQGYLDDSRMMEQFPQGQDLLEQLESTYQGSASGILGQLNLYPREDEIFSQDTQHGPYLRDDPSLHLRPSDLGFMPIVGEVPDPEPRELAIQNAKAYLLRTSMSCNLSLYEHLVNLLTKILNQRPEDPLSILESLNRTMQWEWFHPKLDTLRDDPEMQPTYEMAEKQKALFIRGGGEGEQEMEEEVTDSPVPNIMETAFYFEQAGVGLSSDESFRIFLALKQLVEQQPIHMCRFWGKILGLSRSYLVAEVEFREGEEEGEEEEVEEMMEGGEVLETHGEEEGEEDEEKVVDSVPKPQWKPPPIIPKEESRSGTNKYLYFVCNEPGRPWTRLPHVTPAQIVCARKIKKFFTGFLDTPVISYPPFPGNEANYLRAQIARISAATHISPLGFYQFGEEEGDEEEEGGAGRDSFEENPDFEGIPVLELVDSMANWVHHTQHILPQGRCTWVNPLQKTEEEEELGEEEEKADEAMEEVEQEVGPPLLTPLSEDAEIMHLSPWTTRLSCSLSPQYSVAIVRSNLWPGAYAYATGKKFENIYIGWGHKYSPENFNPMLPALIQQEYPSGPEITEMSDPTVEEEQALKAAQEQALAAAEEEEEDEEEEEDEDLED.

Disordered stretches follow at residues 1–94 (MGEP…GYTP), 376–407 (ETHG…IIPK), 495–514 (EEEG…FEEN), and 663–708 (GPEI…DLED). The span at 10–32 (PSQTRRASQGSERARSQEYSQPL) shows a compositional bias: polar residues. Low complexity predominate over residues 47 to 56 (RGSRSSQGSQ). Residues 495–504 (EEEGDEEEEG) show a composition bias toward acidic residues. Residues 680–690 (LKAAQEQALAA) show a composition bias toward low complexity. The segment covering 691 to 708 (AEEEEEDEEEEEDEDLED) has biased composition (acidic residues).

Belongs to the flagellar radial spoke RSP4/6 family. As to quaternary structure, component of the axonemal radial spoke 1 (RS1) and 2 (RS2) complexes, at least composed of spoke head proteins RSPH1, RSPH3, RSPH9 and the cilia-specific component RSPH4A or sperm-specific component RSPH6A, spoke stalk proteins RSPH14, DNAJB13, DYDC1, ROPN1L and NME5, and the RS1 complex-specific anchor protein IQUB. Interacts with RSPH1. Interacts with RSPH3B. Interacts with RSPH4A. Interacts with RSPH9. Interacts with RSPH10B. In terms of processing, phosphorylated by PKA. Phosphorylation increases in capacitated sperm. In terms of tissue distribution, expressed in sperm and testis (at protein level).

The protein localises to the cytoplasm. It localises to the cytoskeleton. The protein resides in the flagellum axoneme. Functions as part of radial spoke complexes in the axoneme of sperm flagella that play an important part in motility. The triple radial spokes (RS1, RS2 and RS3) are required to modulate beating of the sperm flagellum. The polypeptide is Radial spoke head protein 6 homolog A (Mus musculus (Mouse)).